Reading from the N-terminus, the 443-residue chain is Probable glycine dehydrogenase (decarboxylating) subunit 1 (443 aa).

Belongs to the GcvP family. N-terminal subunit subfamily. The glycine cleavage system is composed of four proteins: P, T, L and H. In this organism, the P 'protein' is a heterodimer of two subunits.

It catalyses the reaction N(6)-[(R)-lipoyl]-L-lysyl-[glycine-cleavage complex H protein] + glycine + H(+) = N(6)-[(R)-S(8)-aminomethyldihydrolipoyl]-L-lysyl-[glycine-cleavage complex H protein] + CO2. Its function is as follows. The glycine cleavage system catalyzes the degradation of glycine. The P protein binds the alpha-amino group of glycine through its pyridoxal phosphate cofactor; CO(2) is released and the remaining methylamine moiety is then transferred to the lipoamide cofactor of the H protein. The polypeptide is Probable glycine dehydrogenase (decarboxylating) subunit 1 (Desulfovibrio desulfuricans (strain ATCC 27774 / DSM 6949 / MB)).